The following is a 259-amino-acid chain: Global transcriptional regulator CodY (259 aa).

Positions Met-1–Leu-155 are GAF domain. A DNA-binding region (H-T-H motif) is located at residues Ala-203–Arg-222. Ser-215 carries the phosphoserine modification.

This sequence belongs to the CodY family.

The protein resides in the cytoplasm. DNA-binding global transcriptional regulator which is involved in the adaptive response to starvation and acts by directly or indirectly controlling the expression of numerous genes in response to nutrient availability. During rapid exponential growth, CodY is highly active and represses genes whose products allow adaptation to nutrient depletion. The protein is Global transcriptional regulator CodY of Bacillus cereus (strain B4264).